A 516-amino-acid polypeptide reads, in one-letter code: Putative F-box and FNIP repeat-containing protein L414 (516 aa).

In terms of domain architecture, F-box spans 4-49; sequence INDLNMDVILHLLTFLTDKNKLNFMMTCTHLYQFISCVKYNNFQLF. 5 FNIP repeats span residues 123–165, 166–208, 341–383, 385–428, and 429–470; these read FNHT…FGEN, FNKM…LMYS, YNPK…NFNG, YDNI…FGKL, and YNKP…FGYM.

This Acanthamoeba polyphaga (Amoeba) protein is Putative F-box and FNIP repeat-containing protein L414.